We begin with the raw amino-acid sequence, 395 residues long: Protein hedgehog (395 aa).

The N-terminal stretch at 1 to 26 is a signal peptide; that stretch reads MDNHSSVPWASAASVTCLSLDAKCHS. The span at 26–43 shows a compositional bias: low complexity; sequence SSSSSCSSKSTASSISAS. Residues 26 to 46 are disordered; that stretch reads SSSSSCSSKSTASSISASPET. Residues 27–82 constitute a propeptide that is removed on maturation; that stretch reads SSSSCSSKSTASSISASPETQTMRHIAHTQRCLSRLTSLVALLLIVLPMMFSPAHS. Cys-83 is lipidated: N-palmitoyl cysteine. Ca(2+) is bound by residues Glu-147, Glu-148, Asp-153, Thr-183, Glu-184, Asp-187, and Asp-189. The Cholesterol glycine ester moiety is linked to residue Gly-255.

This sequence belongs to the hedgehog family. Interacts with shf. The C-terminal part of the hedgehog protein precursor displays an autoproteolysis activity that results in the cleavage of the full-length protein into two parts (N-product and C-product). In addition, the C-terminal part displays a cholesterol transferase activity that results by the covalent attachment of a cholesterol moiety to the C-terminal of the newly generated N-product. The N-product is the active species in both local and long-range signaling, whereas the C-product has no signaling activity. Post-translationally, cholesterylation is required for N-product targeting to lipid rafts and multimerization. In terms of processing, N-palmitoylation by Rasp of the hedgehog N-product, within the secretory pathway, is required for the embryonic and larval patterning activities of the hedgehog signal.

Its subcellular location is the nucleus. It localises to the cytoplasm. The protein resides in the cell membrane. It carries out the reaction glycyl-L-cysteinyl-[protein] + cholesterol + H(+) = [protein]-C-terminal glycyl cholesterol ester + N-terminal L-cysteinyl-[protein]. Its function is as follows. The C-terminal part of the hedgehog protein precursor displays an autoproteolysis activity that results in the cleavage of the full-length protein into two parts (N-product and C-product). In addition, the C-terminal part displays a cholesterol transferase activity that results by the covalent attachment of a cholesterol moiety to the C-terminal of the newly generated N-product. Once cleaved, the C-product has no signaling activity and diffuses from the cell. Functionally, the dually lipidated hedgehog protein N-product is a morphogen which is essential for a variety of patterning events during development. Establishes the anterior-posterior axis of the embryonic segments and patterns the larval imaginal disks. Binds to the patched (ptc) receptor, which functions in association with smoothened (smo), to activate the transcription of target genes wingless (wg), decapentaplegic (dpp) and ptc. In the absence of hh, ptc represses the constitutive signaling activity of smo through fused (fu). Essential component of a signaling pathway which regulates the Duox-dependent gut immune response to bacterial uracil; required to activate Cad99C-dependent endosome formation, norpA-dependent Ca2+ mobilization and p38 MAPK, which are essential steps in the Duox-dependent production of reactive oxygen species (ROS) in response to intestinal bacterial infection. During photoreceptor differentiation, it up-regulates transcription of Ubr3, which in turn promotes the hh-signaling pathway by mediating the ubiquitination and degradation of cos. This chain is Protein hedgehog, found in Drosophila simulans (Fruit fly).